Reading from the N-terminus, the 94-residue chain is Co-chaperonin GroES (94 aa).

The protein belongs to the GroES chaperonin family. In terms of assembly, heptamer of 7 subunits arranged in a ring. Interacts with the chaperonin GroEL.

It is found in the cytoplasm. Its function is as follows. Together with the chaperonin GroEL, plays an essential role in assisting protein folding. The GroEL-GroES system forms a nano-cage that allows encapsulation of the non-native substrate proteins and provides a physical environment optimized to promote and accelerate protein folding. GroES binds to the apical surface of the GroEL ring, thereby capping the opening of the GroEL channel. This Bacillus mycoides (strain KBAB4) (Bacillus weihenstephanensis) protein is Co-chaperonin GroES.